Reading from the N-terminus, the 308-residue chain is Oxygen-dependent coproporphyrinogen-III oxidase (308 aa).

S100 lines the substrate pocket. The a divalent metal cation site is built by H104 and H114. The Proton donor role is filled by H114. 116-118 (NFR) is a substrate binding site. The a divalent metal cation site is built by H153 and H183. Positions 248-283 (YVEFNLVFDRGTIFGLQSGGRTESILSSMPPIATWK) are important for dimerization. Residue 266–268 (GGR) coordinates substrate.

It belongs to the aerobic coproporphyrinogen-III oxidase family. In terms of assembly, homodimer. Requires a divalent metal cation as cofactor.

Its subcellular location is the cytoplasm. The enzyme catalyses coproporphyrinogen III + O2 + 2 H(+) = protoporphyrinogen IX + 2 CO2 + 2 H2O. It functions in the pathway porphyrin-containing compound metabolism; protoporphyrin-IX biosynthesis; protoporphyrinogen-IX from coproporphyrinogen-III (O2 route): step 1/1. Its function is as follows. Involved in the heme biosynthesis. Catalyzes the aerobic oxidative decarboxylation of propionate groups of rings A and B of coproporphyrinogen-III to yield the vinyl groups in protoporphyrinogen-IX. The protein is Oxygen-dependent coproporphyrinogen-III oxidase of Francisella tularensis subsp. tularensis (strain FSC 198).